The following is a 90-amino-acid chain: MATSAAAVQDEPATKFAKDQLKAIIERIERLEEEKKTISDDIRDVYAEAKGNGYDVKALRTIVRMRKQDANERAEQETILETYMQALGML.

The protein belongs to the UPF0335 family.

This Rhodopseudomonas palustris (strain HaA2) protein is UPF0335 protein RPB_1426.